Here is a 736-residue protein sequence, read N- to C-terminus: MPDHDSTALLSRQTKRRRVDIGVKRTVGTASAFFAKARATFFSAMNPQGSEQDVEYSVVQHADGEKPNVLRKLLKRANSYEDAMMPFPGATIISQLLKNNMNKNGGTEPSFQASGLSSTGSEVHQEDVCSNSSRDSPQECLSPFGRPTMSQFDVDRLCDEHLRAKRARVENIIRGMSHSPRVALRGNENEREIRPQSVSPRESYRENKRKQNWPQQQQQSFQQLVSARKEQKREERRQLKQQLEDMQKQLRQLQEEFYQIYDSTDSENDEDGNLSEDRMRSETVDAQAGDSVGRSDNEMCELDPGQFIDRARALIREQEIGENKPKREGPKEKDQGPNSFHPEGKHLAETLKQELNTAMSQVVDTVVKVFSSKPSRQLPQVFPPLQIPQARFAVNGENHNFHTANQRLQCFGDVIIPNPLDTFSSVPMPGATDQTDALPLVVRKNSSDQPASAPPAGGHHASLHQSPLSATAGFSTSSFRHPFPLPLMAYPFQSPLGAPSASFPGKERASPESLDLTRETTSLRTKMSSHHMNHHPCSPAHPPSAAEGLSLSLIKSECGDLQDMSEISPYSGSAMQEGLSPNHLKKAKLMFFYTRYPSSNMLKTYFSDVKFNRCITSQLIKWFSNFREFYYIQMEKYARQAINDGVTSTEELSITRDCELYRALNMHYNKANDFEVPERFLEVAQITLREFFNAIIAGKDVDPSWKKAIYKVICKLDSEVPEIFKSPNCLQELLHE.

Over residues 103-135 (KNGGTEPSFQASGLSSTGSEVHQEDVCSNSSRD) the composition is skewed to polar residues. The disordered stretch occupies residues 103-146 (KNGGTEPSFQASGLSSTGSEVHQEDVCSNSSRDSPQECLSPFGR). Positions 163–168 (RAKRAR) match the Nuclear localization signal motif. 5 disordered regions span residues 180-220 (PRVA…QQQS), 261-301 (YDST…EMCE), 319-344 (EIGENKPKREGPKEKDQGPNSFHPEG), 445-465 (NSSDQPASAPPAGGHHASLHQ), and 499-518 (PSASFPGKERASPESLDLTR). A compositionally biased stretch (acidic residues) spans 264–274 (TDSENDEDGNL). Residues 319–335 (EIGENKPKREGPKEKDQ) show a composition bias toward basic and acidic residues. Low complexity predominate over residues 450–460 (PASAPPAGGHH). A compositionally biased stretch (basic and acidic residues) spans 505 to 518 (GKERASPESLDLTR). Positions 576-634 (QEGLSPNHLKKAKLMFFYTRYPSSNMLKTYFSDVKFNRCITSQLIKWFSNFREFYYIQM) constitute a Prospero-type homeo domain. Positions 576–734 (QEGLSPNHLK…KSPNCLQELL (159 aa)) are homeo-Prospero. One can recognise a Prospero domain in the interval 635–734 (EKYARQAIND…KSPNCLQELL (100 aa)).

Belongs to the Prospero homeodomain family. As to expression, expressed most actively in the developing lens and midgut and at lower levels in the developing brain, heart, muscle and retina.

The protein resides in the nucleus. Transcription factor which may be involved in developmental processes such as cell fate determination, gene transcriptional regulation and progenitor cell regulation in a number of organs. May be essential in the development and function of the eye. May play a role in the regulation of the circadian rhythm by repressing the expression of clock genes. This Gallus gallus (Chicken) protein is Prospero homeobox protein 1 (PROX1).